Consider the following 501-residue polypeptide: NAD(P)H-quinone oxidoreductase chain 4, chloroplastic (501 aa).

14 helical membrane passes run 4-24 (FPWL…ILFL), 35-55 (YTIC…CYHF), 84-104 (GLSI…TLAA), 111-129 (SRLL…IGSF), 134-154 (LLLF…LLSM), 168-188 (FILY…GMDL), 209-229 (ALEI…SPII), 243-263 (HYST…YGLI), 273-293 (AHSI…IYAA), 306-326 (IAYS…SITD), 331-351 (GAIL…FLAG), 387-407 (LALP…GIIT), 417-437 (ILIT…SLSM), and 463-483 (LFVS…PDFV).

Belongs to the complex I subunit 4 family.

The protein localises to the plastid. It is found in the chloroplast thylakoid membrane. It catalyses the reaction a plastoquinone + NADH + (n+1) H(+)(in) = a plastoquinol + NAD(+) + n H(+)(out). It carries out the reaction a plastoquinone + NADPH + (n+1) H(+)(in) = a plastoquinol + NADP(+) + n H(+)(out). The protein is NAD(P)H-quinone oxidoreductase chain 4, chloroplastic of Buxus microphylla (Littleleaf boxwood).